The sequence spans 806 residues: Protein bimA (806 aa).

TPR repeat units lie at residues 76–109 (LGCS…WTSR) and 127–160 (AAVL…NPFM). 3 disordered regions span residues 202-348 (VLPP…HRLG), 353-372 (TVSG…QGVG), and 401-460 (REVK…ASSK). Over residues 224–237 (AGTTRSDSTSTHGS) the composition is skewed to polar residues. Positions 246–257 (GSTVSVASSGTG) are enriched in low complexity. A bimA domain region spans residues 260-399 (LPREGMETPG…ISSTALGVKE (140 aa)). Residues 328–348 (TKFESDEGHTERDAGMGHRLG) show a composition bias toward basic and acidic residues. Polar residues predominate over residues 408–421 (TTGNKARTTTSSNV). Basic and acidic residues predominate over residues 432–445 (HAGEIHDGDSKEYR). The segment covering 446–459 (GTSSTSNGSQNASS) has biased composition (low complexity). 6 TPR repeats span residues 513-546 (PWVL…APSR), 581-614 (PEAW…DPHF), 616-648 (YGFT…DSRH), 649-682 (YNAW…NPSN), 684-716 (VLIC…APHS), and 751-784 (ANVH…DPKA).

It belongs to the APC3/CDC27 family.

The protein resides in the nucleus. Required for the completion of mitosis in Aspergillus nidulans. The protein is Protein bimA (bimA) of Emericella nidulans (strain FGSC A4 / ATCC 38163 / CBS 112.46 / NRRL 194 / M139) (Aspergillus nidulans).